A 171-amino-acid chain; its full sequence is Peptide methionine sulfoxide reductase MsrA (171 aa).

C12 is a catalytic residue.

The protein belongs to the MsrA Met sulfoxide reductase family.

It catalyses the reaction L-methionyl-[protein] + [thioredoxin]-disulfide + H2O = L-methionyl-(S)-S-oxide-[protein] + [thioredoxin]-dithiol. The catalysed reaction is [thioredoxin]-disulfide + L-methionine + H2O = L-methionine (S)-S-oxide + [thioredoxin]-dithiol. Has an important function as a repair enzyme for proteins that have been inactivated by oxidation. Catalyzes the reversible oxidation-reduction of methionine sulfoxide in proteins to methionine. The chain is Peptide methionine sulfoxide reductase MsrA from Leuconostoc mesenteroides subsp. mesenteroides (strain ATCC 8293 / DSM 20343 / BCRC 11652 / CCM 1803 / JCM 6124 / NCDO 523 / NBRC 100496 / NCIMB 8023 / NCTC 12954 / NRRL B-1118 / 37Y).